Reading from the N-terminus, the 486-residue chain is UDP-N-acetylmuramate--L-alanine ligase (486 aa).

Position 129 to 135 (129 to 135) interacts with ATP; the sequence is GTHGKTT.

It belongs to the MurCDEF family.

It is found in the cytoplasm. The catalysed reaction is UDP-N-acetyl-alpha-D-muramate + L-alanine + ATP = UDP-N-acetyl-alpha-D-muramoyl-L-alanine + ADP + phosphate + H(+). It functions in the pathway cell wall biogenesis; peptidoglycan biosynthesis. Functionally, cell wall formation. The chain is UDP-N-acetylmuramate--L-alanine ligase from Vibrio vulnificus (strain CMCP6).